A 637-amino-acid chain; its full sequence is Biosynthetic arginine decarboxylase (637 aa).

K101 is subject to N6-(pyridoxal phosphate)lysine. Residue 286–296 coordinates substrate; that stretch reads FDVGGGLAVDY.

It belongs to the Orn/Lys/Arg decarboxylase class-II family. SpeA subfamily. The cofactor is Mg(2+). Pyridoxal 5'-phosphate is required as a cofactor.

The enzyme catalyses L-arginine + H(+) = agmatine + CO2. It functions in the pathway amine and polyamine biosynthesis; agmatine biosynthesis; agmatine from L-arginine: step 1/1. Functionally, catalyzes the biosynthesis of agmatine from arginine. This chain is Biosynthetic arginine decarboxylase, found in Shewanella woodyi (strain ATCC 51908 / MS32).